Consider the following 290-residue polypeptide: Phosphatidylglycerol--prolipoprotein diacylglyceryl transferase (290 aa).

The next 7 helical transmembrane spans lie at 21-41 (VALH…MWLA), 60-80 (LLYA…VLFY), 96-116 (WDGG…MVIF), 124-144 (FFQV…AGRL), 198-218 (SQLY…NLFI), 225-245 (GSVS…VEFF), and 260-280 (ISMG…MMIW). Position 143 (Arg-143) interacts with a 1,2-diacyl-sn-glycero-3-phospho-(1'-sn-glycerol).

The protein belongs to the Lgt family.

It localises to the cell inner membrane. It carries out the reaction L-cysteinyl-[prolipoprotein] + a 1,2-diacyl-sn-glycero-3-phospho-(1'-sn-glycerol) = an S-1,2-diacyl-sn-glyceryl-L-cysteinyl-[prolipoprotein] + sn-glycerol 1-phosphate + H(+). Its pathway is protein modification; lipoprotein biosynthesis (diacylglyceryl transfer). Its function is as follows. Catalyzes the transfer of the diacylglyceryl group from phosphatidylglycerol to the sulfhydryl group of the N-terminal cysteine of a prolipoprotein, the first step in the formation of mature lipoproteins. This chain is Phosphatidylglycerol--prolipoprotein diacylglyceryl transferase, found in Enterobacter sp. (strain 638).